The chain runs to 671 residues: DNA ligase (671 aa).

NAD(+)-binding positions include 32–36 (DAEYD), 81–82 (SL), and E113. K115 functions as the N6-AMP-lysine intermediate in the catalytic mechanism. The NAD(+) site is built by R136, E173, K290, and K314. C408, C411, C426, and C432 together coordinate Zn(2+). Positions 593-671 (EIDSPFAGKT…ETEMLRLLGS (79 aa)) constitute a BRCT domain.

It belongs to the NAD-dependent DNA ligase family. LigA subfamily. It depends on Mg(2+) as a cofactor. The cofactor is Mn(2+).

The enzyme catalyses NAD(+) + (deoxyribonucleotide)n-3'-hydroxyl + 5'-phospho-(deoxyribonucleotide)m = (deoxyribonucleotide)n+m + AMP + beta-nicotinamide D-nucleotide.. Its function is as follows. DNA ligase that catalyzes the formation of phosphodiester linkages between 5'-phosphoryl and 3'-hydroxyl groups in double-stranded DNA using NAD as a coenzyme and as the energy source for the reaction. It is essential for DNA replication and repair of damaged DNA. The protein is DNA ligase of Escherichia coli O6:H1 (strain CFT073 / ATCC 700928 / UPEC).